Here is a 326-residue protein sequence, read N- to C-terminus: Pyruvate dehydrogenase E1 component subunit beta (326 aa).

Glu-59 is a thiamine diphosphate binding site.

As to quaternary structure, heterodimer of an alpha and a beta chain. Thiamine diphosphate serves as cofactor.

It carries out the reaction N(6)-[(R)-lipoyl]-L-lysyl-[protein] + pyruvate + H(+) = N(6)-[(R)-S(8)-acetyldihydrolipoyl]-L-lysyl-[protein] + CO2. Functionally, the pyruvate dehydrogenase complex catalyzes the overall conversion of pyruvate to acetyl-CoA and CO(2). It contains multiple copies of three enzymatic components: pyruvate dehydrogenase (E1), dihydrolipoamide acetyltransferase (E2) and lipoamide dehydrogenase (E3). This is Pyruvate dehydrogenase E1 component subunit beta (pdhB) from Rickettsia felis (strain ATCC VR-1525 / URRWXCal2) (Rickettsia azadi).